A 216-amino-acid chain; its full sequence is UDP-N-acetylglucosamine transferase subunit ALG14 (216 aa).

The Lumenal portion of the chain corresponds to 1–3 (MVC). Residues 4–24 (VLVLAAAAGAVAVFLILRIWV) form a helical membrane-spanning segment. Residues 25–216 (VLRSMDVTPR…PKSVYLGRIV (192 aa)) lie on the Cytoplasmic side of the membrane.

It belongs to the ALG14 family. In terms of assembly, forms with ALG13 the active heterodimeric UDP-N-acetylglucosamine transferase complex.

The protein resides in the endoplasmic reticulum membrane. In terms of biological role, part of the UDP-N-acetylglucosamine transferase complex that operates in the biosynthetic pathway of dolichol-linked oligosaccharides, the glycan precursors employed in protein asparagine (N)-glycosylation. The assembly of dolichol-linked oligosaccharides begins on the cytosolic side of the endoplasmic reticulum membrane and finishes in its lumen. The sequential addition of sugars to dolichol pyrophosphate produces dolichol-linked oligosaccharides containing fourteen sugars, including two GlcNAcs, nine mannoses and three glucoses. Once assembled, the oligosaccharides are transferred from the lipid to nascent proteins by oligosaccharyltransferases. Functions as a protein-membrane adapter recruiting ALG13 at the cytoplasmic face of the endoplasmic reticulum, where the complex catalyzes the second step of dolichol pyrophosphate biosynthesis, transferring a beta1,4-linked N-acetylglucosamine (GlcNAc) from UDP-GlcNAc to GlcNAc-pyrophosphatedolichol (Gn-PDol) to produce N,N'-diacetylchitobiosyl diphosphodolichol. N,N'-diacetylchitobiosyl diphosphodolichol is a substrate for ALG1, the following enzyme in the biosynthetic pathway. This Homo sapiens (Human) protein is UDP-N-acetylglucosamine transferase subunit ALG14.